We begin with the raw amino-acid sequence, 212 residues long: Phosphatidylserine decarboxylase proenzyme (212 aa).

The Schiff-base intermediate with substrate; via pyruvic acid role is filled by Ser-182. Pyruvic acid (Ser); by autocatalysis is present on Ser-182.

It belongs to the phosphatidylserine decarboxylase family. PSD-A subfamily. In terms of assembly, heterodimer of a large membrane-associated beta subunit and a small pyruvoyl-containing alpha subunit. Requires pyruvate as cofactor. Is synthesized initially as an inactive proenzyme. Formation of the active enzyme involves a self-maturation process in which the active site pyruvoyl group is generated from an internal serine residue via an autocatalytic post-translational modification. Two non-identical subunits are generated from the proenzyme in this reaction, and the pyruvate is formed at the N-terminus of the alpha chain, which is derived from the carboxyl end of the proenzyme. The post-translation cleavage follows an unusual pathway, termed non-hydrolytic serinolysis, in which the side chain hydroxyl group of the serine supplies its oxygen atom to form the C-terminus of the beta chain, while the remainder of the serine residue undergoes an oxidative deamination to produce ammonia and the pyruvoyl prosthetic group on the alpha chain.

The protein localises to the cell membrane. The catalysed reaction is a 1,2-diacyl-sn-glycero-3-phospho-L-serine + H(+) = a 1,2-diacyl-sn-glycero-3-phosphoethanolamine + CO2. Its pathway is phospholipid metabolism; phosphatidylethanolamine biosynthesis; phosphatidylethanolamine from CDP-diacylglycerol: step 2/2. In terms of biological role, catalyzes the formation of phosphatidylethanolamine (PtdEtn) from phosphatidylserine (PtdSer). The chain is Phosphatidylserine decarboxylase proenzyme from Chlorobium phaeobacteroides (strain DSM 266 / SMG 266 / 2430).